Consider the following 284-residue polypeptide: Probable palmitoyltransferase ZDHHC24 (284 aa).

Residues 1-18 (MGESWAARGAEGAPARMP) are Cytoplasmic-facing. A helical membrane pass occupies residues 19–39 (LVLTALWAAVVVLELAYVMVL). The Extracellular portion of the chain corresponds to 40-52 (GPGPPPLGPLARA). A helical membrane pass occupies residues 53 to 73 (LQLALAAYQLLNLLGNVVLFL). Residues 74-137 (RSDPSIRGVM…GCCVGFHNYR (64 aa)) are Cytoplasmic-facing. The region spanning 94 to 144 (AYCYQCQSQVPPRSGHCSACRVCILRRDHHCRLLGCCVGFHNYRPFLCLLL) is the DHHC domain. Cysteine 124 functions as the S-palmitoyl cysteine intermediate in the catalytic mechanism. The helical transmembrane segment at 138 to 158 (PFLCLLLHSAGVLLHISVLLG) threads the bilayer. The Extracellular segment spans residues 159–166 (PALSALLQ). The helical transmembrane segment at 167 to 187 (AHSALYTVALLLLPWLMLLTG) threads the bilayer. The Cytoplasmic portion of the chain corresponds to 188-195 (KVSLAQFA). Residues 196–216 (LAFVVDTCVAGALLCGAGLLF) traverse the membrane as a helical segment. Residues 217 to 284 (HGMLLLRGQT…TPGDVGLVTS (68 aa)) lie on the Extracellular side of the membrane.

The protein belongs to the DHHC palmitoyltransferase family.

The protein localises to the membrane. It catalyses the reaction L-cysteinyl-[protein] + hexadecanoyl-CoA = S-hexadecanoyl-L-cysteinyl-[protein] + CoA. In terms of biological role, probable palmitoyltransferase that could catalyze the addition of palmitate onto various protein substrates. This Mus musculus (Mouse) protein is Probable palmitoyltransferase ZDHHC24.